A 348-amino-acid chain; its full sequence is GPALPP motifs-containing protein 1 (348 aa).

2 disordered regions span residues 1-163 and 177-317; these read MARD…AKGP and QRMK…DLKV. Residue Ala2 is modified to N-acetylalanine. The short motif at 7 to 12 is the GPALPP motif 1 element; sequence GPALPP. Residues 14–27 show a composition bias toward basic and acidic residues; it reads FKERATVEDQERDP. At Ser28 the chain carries Phosphoserine. Positions 32–37 match the GPALPP motif 2 motif; it reads GPALPP. Over residues 41–59 the composition is skewed to low complexity; sequence SSSSDSSDSNEDSSSLSEE. A compositionally biased stretch (acidic residues) spans 60 to 69; it reads GNQESEEDDA. The GPALPP motif 3 signature appears at 93–98; that stretch reads GPALPP. Ser106 carries the phosphoserine modification. The span at 108–117 shows a compositional bias: pro residues; sequence PRPIIGPALP. The GPALPP motif 4 motif lies at 113 to 118; the sequence is GPALPP. Phosphoserine is present on residues Ser138, Ser143, and Ser148. Acidic residues predominate over residues 144-154; sequence EEAESGEDEDI. Basic and acidic residues-rich tracts occupy residues 177–195, 235–269, 277–287, and 295–317; these read QRMK…KPVT, PADR…KRLA, ESKRSESLMDI, and KAAE…DLKV. Glycyl lysine isopeptide (Lys-Gly) (interchain with G-Cter in SUMO2) cross-links involve residues Lys279 and Lys316.

The sequence is that of GPALPP motifs-containing protein 1 (Gpalpp1) from Rattus norvegicus (Rat).